The sequence spans 373 residues: Transcription factor SPATULA (373 aa).

The segment covering 1–21 has biased composition (basic and acidic residues); sequence MISQREEREEKKQRVMGDKKL. 2 disordered regions span residues 1–46 and 141–210; these read MISQ…PSSS and VQGN…KRRR. The span at 141-160 shows a compositional bias: low complexity; that stretch reads VQGNSSGTRVSSSSVGASGN. Acidic residues predominate over residues 161 to 177; that stretch reads ETDEYDCESEEGGEAVV. The span at 182-191 shows a compositional bias: low complexity; sequence SSKSGPSSRS. Residues 197 to 210 show a composition bias toward basic and acidic residues; the sequence is RAAEVHNLSEKRRR. Residues 197-246 enclose the bHLH domain; sequence RAAEVHNLSEKRRRSRINEKMKALQSLIPNSNKTDKASMLDEAIEYLKQL.

Homodimer. Interacts with HEC1, HEC2 and HEC3. Binds to RGL2 and RGA. Expressed in lateral root caps, young leaves, stipules, maturing pith cells of the stem, differentiating vascular cells, shoot apical meristems and flowers.

It localises to the nucleus. Transcription factor that plays a role in floral organogenesis. Promotes the growth of carpel margins and of pollen tract tissues derived from them. In Arabidopsis thaliana (Mouse-ear cress), this protein is Transcription factor SPATULA (SPT).